The sequence spans 677 residues: Sulfate transporter 2.1 (677 aa).

Over 1 to 118 (MKERDSESFE…NYKLTMFKND (118 aa)) the chain is Cytoplasmic. The tract at residues 23 to 54 (STHMIQMAMANSGSSAAAQAGQDQPDRSKWLL) is disordered. The segment covering 28–44 (QMAMANSGSSAAAQAGQ) has biased composition (low complexity). A helical membrane pass occupies residues 119-139 (LMAGLTLASLCIPQSIGYATL). Topologically, residues 140–141 (AK) are extracellular. Residues 142–162 (LDPQYGLYTSVVPPLIYALMG) traverse the membrane as a helical segment. The Cytoplasmic segment spans residues 163-166 (TSRE). The chain crosses the membrane as a helical span at residues 167-187 (IAIGPVAVVSLLISSMLQKLI). Residues 188–198 (DPETDPLGYKK) are Extracellular-facing. A helical transmembrane segment spans residues 199 to 219 (LVLTTTFFAGIFQASFGLFRL). Residues 220–221 (GF) lie on the Cytoplasmic side of the membrane. A helical transmembrane segment spans residues 222–242 (LVDFLSHAAIVGFMGGAAIVI). At 243 to 278 (GLQQLKGLLGITNFTTNTDIVSVLRAVWRSCQQQWS) the chain is on the extracellular side. An N-linked (GlcNAc...) asparagine glycan is attached at asparagine 255. Residues 279 to 299 (PHTFILGCSFLSFILITRFIG) traverse the membrane as a helical segment. Over 300-304 (KKYKK) the chain is Cytoplasmic. The helical transmembrane segment at 305-325 (LFWLPAIAPLIAVVVSTLMVF) threads the bilayer. Residues 326 to 360 (LTKADEHGVKTVRHIKGGLNPMSIQDLDFNTPHLG) lie on the Extracellular side of the membrane. The helical transmembrane segment at 361–381 (QIAKIGLIIAIVALTEAIAVG) threads the bilayer. Over 382-397 (RSFAGIKGYRLDGNKE) the chain is Cytoplasmic. A helical transmembrane segment spans residues 398–418 (MVAIGFMNVLGSFTSCYAATG). Residues 419-426 (SFSRTAVN) lie on the Extracellular side of the membrane. The chain crosses the membrane as a helical span at residues 427–447 (FAAGCETAMSNIVMAVTVFVA). Residues 448-454 (LECLTRL) are Cytoplasmic-facing. A helical membrane pass occupies residues 455–475 (LYYTPIAILASIILSALPGLI). Topologically, residues 476–490 (NINEAIHIWKVDKFD) are extracellular. The helical transmembrane segment at 491–511 (FLALIGAFFGVLFASVEIGLL) threads the bilayer. At 512 to 677 (VAVVISFAKI…ALDACFGLKV (166 aa)) the chain is on the cytoplasmic side. An STAS domain is found at 548 to 672 (YPMTVKTPGV…LTIGEALDAC (125 aa)).

This sequence belongs to the SLC26A/SulP transporter (TC 2.A.53) family. In terms of tissue distribution, expressed in root cap, central cylinder of roots and in vascular tissues of leaves.

The protein resides in the membrane. In terms of biological role, low-affinity H(+)/sulfate cotransporter that may be involved in root-to-shoot translocation of sulfate. Plays a central role in the regulation of sulfate assimilation. The chain is Sulfate transporter 2.1 (SULTR2;1) from Arabidopsis thaliana (Mouse-ear cress).